The primary structure comprises 187 residues: 1,6-anhydro-N-acetylmuramyl-L-alanine amidase AmpD (187 aa).

In terms of domain architecture, N-acetylmuramoyl-L-alanine amidase spans 29–167; it reads SLLVVHNISL…TPDRKTDPGP (139 aa). H34 is a Zn(2+) binding site. The active-site Proton acceptor is the E116. Residues H154 and D164 each coordinate Zn(2+).

The protein belongs to the N-acetylmuramoyl-L-alanine amidase 2 family. The cofactor is Zn(2+).

Its subcellular location is the cytoplasm. The catalysed reaction is Hydrolyzes the link between N-acetylmuramoyl residues and L-amino acid residues in certain cell-wall glycopeptides.. In terms of biological role, involved in cell wall peptidoglycan recycling. Specifically cleaves the amide bond between the lactyl group of N-acetylmuramic acid and the alpha-amino group of the L-alanine in degradation products containing an anhydro N-acetylmuramyl moiety. This is 1,6-anhydro-N-acetylmuramyl-L-alanine amidase AmpD (ampD) from Salmonella typhimurium (strain LT2 / SGSC1412 / ATCC 700720).